The chain runs to 634 residues: MTVDTDKQTLGFQTEVKQLLQLMIHSLYSNKEIFLRELVSNAADAADKLRFEALVKPDLLEGSGELRIRVDFDKDARTVTIDDNGIGMSREDAVSHLGTIAKSGTADFLKHLSGDQKKDANLIGQFGVGFYSAFIVADQVDVYSRRAGLPASDGVHWSSRGEGEFEVASVDKPERGTRIVLQLKEGEESFADGWTLRNILKKYSDHIGLPIEMRKEHYGEDADKPAEPEWEVVNRASALWTRPKSEIKDEEYQEFYKHVAHDAGNPLAWSHNKVEGKLDYTSLLFVPGRAPFDLYHRDSAKGLKLYVQRVFIMDQAEQFLPLYLRFIKGVVDSADLSLNVSREILQSGPVVDSMKSALTKRALDMLEKLAKDKPDDYATFWRNFGQALKEGPAEDYANREKVAGLLRFSSTHDTTGAQSVALADYVGRMTEGQDKLYYLTGESYAQIKDSPHLEVFRKKGIEVLLLTDRIDEWLMSYLTEFDSKSFVDVARGDLDLGKLDSEEDKKAQEEVAKSKEGLASRIKAALGDDVAEVRVSHRLTDSPAILAIGQGDLGLQMRQLLEASGQAVPETKPVFEFNPAHPLIEKLDAEQDMDRFGDLSRVLFDQAALAAGDSLKDPAGYVRRLNKLLLELSA.

An a; substrate-binding region spans residues 1–342 (MTVDTDKQTL…SADLSLNVSR (342 aa)). The segment at 343 to 559 (EILQSGPVVD…QGDLGLQMRQ (217 aa)) is b. The interval 560 to 634 (LLEASGQAVP…LNKLLLELSA (75 aa)) is c.

The protein belongs to the heat shock protein 90 family. As to quaternary structure, homodimer.

It localises to the cytoplasm. Functionally, molecular chaperone. Has ATPase activity. The sequence is that of Chaperone protein HtpG from Xanthomonas campestris pv. campestris (strain 8004).